Consider the following 587-residue polypeptide: Prolycopene isomerase 1, chloroplastic (587 aa).

The segment covering 1–13 has biased composition (low complexity); the sequence is MLCLSLNSSSTSP. The segment at 1–21 is disordered; that stretch reads MLCLSLNSSSTSPPKSPLHHS. The transit peptide at 1-50 directs the protein to the chloroplast; it reads MLCLSLNSSSTSPPKSPLHHSFSRRSMRSWVCSPRVQRKKLGFWSSPKAV.

It belongs to the carotenoid/retinoid oxidoreductase family. CrtISO subfamily. NAD(+) serves as cofactor. It depends on NADP(+) as a cofactor. FAD is required as a cofactor. Up-regulated in the flower buds and flower lip tissue, while it is weakly expressed in leaves.

The protein localises to the plastid. Its subcellular location is the chloroplast membrane. It catalyses the reaction 7,7',9,9'-tetra-cis-lycopene = all-trans-lycopene. Its pathway is carotenoid biosynthesis; lycopene biosynthesis. Functionally, carotene cis-trans-isomerase that converts 7,9,9'-tri-cis-neurosporene to 9'-cis-neurosporene and 7,9,9',7'-tetra-cis-lycopene (also known as prolycopene) into all-trans-lycopene. Isomerization requires redox-active components, suggesting that isomerization is achieved by a reversible redox reaction acting at specific double bonds. Isomerizes adjacent cis-double bonds at C7 and C9 pairwise into the trans-configuration, but is incapable of isomerizing single cis-double bonds at C9 and C9'. The sequence is that of Prolycopene isomerase 1, chloroplastic (CRTISO1) from Oncidium hybrid cultivar (Orchid).